The following is a 544-amino-acid chain: High affinity immunoglobulin alpha and immunoglobulin mu Fc receptor (544 aa).

An N-terminal signal peptide occupies residues 1–16; the sequence is MPLFLILCLLQGSSFA. At 17–462 the chain is on the extracellular side; the sequence is LPQKRPHPRW…TFPEDESSSR (446 aa). The 109-residue stretch at 61 to 169 folds into the Ig-like V-type domain; it reads PNALKGSRLV…NMLFLSMNLT (109 aa). Residues 75–97 are mediates immunoglobulin Fc fragment-binding; that stretch reads GGAVTIQCHYAPSSVNRHQRKYW. A disulfide bridge links Cys-82 with Cys-153. An N-linked (GlcNAc...) asparagine glycan is attached at Asn-167. Residues 218-325 form a disordered region; that stretch reads DTVASTPGTS…TTKADRPRED (108 aa). 2 stretches are compositionally biased toward polar residues: residues 220 to 232 and 280 to 291; these read VAST…TTAS and ASKSRSMSNTTE. The segment covering 307–325 has biased composition (basic and acidic residues); the sequence is ASKDRREITTTKADRPRED. The helical transmembrane segment at 463–483 threads the bilayer; it reads TLAPVSTMLALFMLMALVLLQ. Residues 484–544 lie on the Cytoplasmic side of the membrane; sequence RKLRRRRTSQ…LTAPERNPGP (61 aa). The disordered stretch occupies residues 511 to 544; that stretch reads PQPDQLPHVERKMLQDDSLPAGASLTAPERNPGP.

Interacts with IGHM; this interaction facilitates the endocytosis of IgM-coated microbes or IgM-antigen immune complexes. In terms of processing, N-glycosylated.

Its subcellular location is the cell membrane. Functionally, functions as a receptor for the Fc fragment of IgA and IgM. Binds IgA and IgM with high affinity and mediates their endocytosis. May function in the immune response to microbes mediated by IgA and IgM. This Pongo abelii (Sumatran orangutan) protein is High affinity immunoglobulin alpha and immunoglobulin mu Fc receptor (FCAMR).